A 407-amino-acid polypeptide reads, in one-letter code: Chorismate synthase (407 aa).

NADP(+) contacts are provided by R40 and R46. FMN is bound by residues 140 to 142 (RSS), 261 to 262 (QA), G305, 320 to 324 (KPIST), and R346.

It belongs to the chorismate synthase family. As to quaternary structure, homotetramer. The cofactor is FMNH2.

It catalyses the reaction 5-O-(1-carboxyvinyl)-3-phosphoshikimate = chorismate + phosphate. It functions in the pathway metabolic intermediate biosynthesis; chorismate biosynthesis; chorismate from D-erythrose 4-phosphate and phosphoenolpyruvate: step 7/7. In terms of biological role, catalyzes the anti-1,4-elimination of the C-3 phosphate and the C-6 proR hydrogen from 5-enolpyruvylshikimate-3-phosphate (EPSP) to yield chorismate, which is the branch point compound that serves as the starting substrate for the three terminal pathways of aromatic amino acid biosynthesis. This reaction introduces a second double bond into the aromatic ring system. In Corynebacterium glutamicum (strain R), this protein is Chorismate synthase.